The following is a 207-amino-acid chain: Outer-membrane lipoprotein carrier protein (207 aa).

Positions 1 to 21 (MRLIRMLLATALTFSVIPAHA) are cleaved as a signal peptide.

It belongs to the LolA family. In terms of assembly, monomer.

Its subcellular location is the periplasm. Participates in the translocation of lipoproteins from the inner membrane to the outer membrane. Only forms a complex with a lipoprotein if the residue after the N-terminal Cys is not an aspartate (The Asp acts as a targeting signal to indicate that the lipoprotein should stay in the inner membrane). The sequence is that of Outer-membrane lipoprotein carrier protein from Pseudomonas syringae pv. tomato (strain ATCC BAA-871 / DC3000).